An 814-amino-acid chain; its full sequence is Kinesin-like protein KIF6 (814 aa).

The region spanning 5-345 (TIQIFARVKP…CRFAQRVALI (341 aa)) is the Kinesin motor domain. 97 to 104 (GQTGSGKT) lines the ATP pocket. Coiled-coil stretches lie at residues 356–385 (NPRL…QRTE), 456–494 (LKEE…EALH), and 588–683 (EAKA…KEFE). The disordered stretch occupies residues 752 to 788 (LPSPCPSPHSQKQSSTSTPLEDSIPKRPVSSIPLTGD). Residues 759–771 (PHSQKQSSTSTPL) are compositionally biased toward polar residues.

Belongs to the TRAFAC class myosin-kinesin ATPase superfamily. Kinesin family.

It is found in the cytoplasm. The protein resides in the cytoskeleton. The sequence is that of Kinesin-like protein KIF6 (KIF6) from Homo sapiens (Human).